The following is a 69-amino-acid chain: Beta-defensin 11 (69 aa).

The N-terminal stretch at 1–23 is a signal peptide; that stretch reads MRTLCSLLLIGCLLFSYDTPVVG. 3 disulfide bridges follow: cysteine 35/cysteine 64, cysteine 42/cysteine 57, and cysteine 47/cysteine 65.

It belongs to the beta-defensin family.

It localises to the secreted. Has antibacterial activity. This is Beta-defensin 11 (Defb11) from Rattus norvegicus (Rat).